Here is a 204-residue protein sequence, read N- to C-terminus: Venom allergen 5 (204 aa).

Disulfide bonds link Cys4–Cys17, Cys8–Cys101, Cys26–Cys94, and Cys170–Cys187. In terms of domain architecture, SCP spans 45 to 189 (LKEHNDFRQK…WHKHYLVCNY (145 aa)).

This sequence belongs to the CRISP family. Venom allergen 5-like subfamily. Expressed by the venom gland.

The protein resides in the secreted. Its function is as follows. May have an ancestral function in the promotion of ovum fertilization by sperm. The polypeptide is Venom allergen 5 (Vespula flavopilosa (Downy yellowjacket)).